The chain runs to 360 residues: Photosystem II protein D1 (360 aa).

Topologically, residues Met-1–Leu-28 are cytoplasmic. The chain crosses the membrane as a helical span at residues Tyr-29–Ile-46. The Lumenal portion of the chain corresponds to Cys-47–Phe-117. Position 118 (His-118) interacts with chlorophyll a. The helical transmembrane segment at His-118 to Leu-133 threads the bilayer. Pheophytin a is bound by residues Tyr-126 and Gln-130. At Ser-134–Pro-141 the chain is on the cytoplasmic side. The helical transmembrane segment at Trp-142–Ala-156 threads the bilayer. Pheophytin a is bound at residue Tyr-147. Over Val-157–Pro-196 the chain is Lumenal. [CaMn4O5] cluster-binding residues include Asp-170 and Glu-189. The chain crosses the membrane as a helical span at residues Phe-197 to Leu-218. His-198 lines the chlorophyll a pocket. Met-214 contacts pheophytin a. A quinone is bound by residues His-215 and Ser-264–Phe-265. His-215 lines the Fe cation pocket. Residues Val-219–Phe-273 lie on the Cytoplasmic side of the membrane. Residue His-272 coordinates Fe cation. A helical membrane pass occupies residues Phe-274–Leu-288. Residues Gly-289–Gly-360 lie on the Lumenal side of the membrane. [CaMn4O5] cluster contacts are provided by His-332, Glu-333, Asp-342, and Ala-344. The propeptide occupies Ser-345–Gly-360.

The protein belongs to the reaction center PufL/M/PsbA/D family. In terms of assembly, PSII is composed of 1 copy each of membrane proteins PsbA, PsbB, PsbC, PsbD, PsbE, PsbF, PsbH, PsbI, PsbJ, PsbK, PsbL, PsbM, PsbT, PsbX, PsbY, PsbZ, Psb30/Ycf12, peripheral proteins PsbO, CyanoQ (PsbQ), PsbU, PsbV and a large number of cofactors. It forms dimeric complexes. The D1/D2 heterodimer binds P680, chlorophylls that are the primary electron donor of PSII, and subsequent electron acceptors. It shares a non-heme iron and each subunit binds pheophytin, quinone, additional chlorophylls, carotenoids and lipids. D1 provides most of the ligands for the Mn4-Ca-O5 cluster of the oxygen-evolving complex (OEC). There is also a Cl(-1) ion associated with D1 and D2, which is required for oxygen evolution. The PSII complex binds additional chlorophylls, carotenoids and specific lipids. is required as a cofactor. Post-translationally, C-terminally processed by CtpA; processing is essential to allow assembly of the oxygen-evolving complex and thus photosynthetic growth. In terms of processing, tyr-161 forms a radical intermediate that is referred to as redox-active TyrZ, YZ or Y-Z.

The protein localises to the cellular thylakoid membrane. The catalysed reaction is 2 a plastoquinone + 4 hnu + 2 H2O = 2 a plastoquinol + O2. Its function is as follows. Photosystem II (PSII) is a light-driven water:plastoquinone oxidoreductase that uses light energy to abstract electrons from H(2)O, generating O(2) and a proton gradient subsequently used for ATP formation. It consists of a core antenna complex that captures photons, and an electron transfer chain that converts photonic excitation into a charge separation. The D1/D2 (PsbA/PsbD) reaction center heterodimer binds P680, the primary electron donor of PSII as well as several subsequent electron acceptors. This chain is Photosystem II protein D1, found in Thermostichus vulcanus (Synechococcus vulcanus).